The chain runs to 398 residues: Nonsense-mediated decay protein 4 (398 aa).

Residues 327–355 (PVTSNYRGKNNRGRNNRGRRGNKRRERER) are disordered. Residues 335–350 (KNNRGRNNRGRRGNKR) show a composition bias toward basic residues.

The protein localises to the cytoplasm. In terms of biological role, involved in nonsense-mediated decay of mRNAs containing premature stop codons. This chain is Nonsense-mediated decay protein 4 (NMD4), found in Candida albicans (strain SC5314 / ATCC MYA-2876) (Yeast).